The primary structure comprises 515 residues: E3 ubiquitin-protein ligase RNF38 (515 aa).

A Bipartite nuclear localization signal 1 motif is present at residues 57-71 (DSPSPKRQRLSHSVF). Residues 73 to 141 (YTSASPAPSP…LSRHNSISQD (69 aa)) are disordered. A compositionally biased stretch (polar residues) spans 89 to 104 (MTSNRQPPSVRPSQHH). The short motif at 115 to 131 (RNRRSPPVRRQRGRRDR) is the Bipartite nuclear localization signal 2 element. Residues 115–134 (RNRRSPPVRRQRGRRDRLSR) show a composition bias toward basic residues. Residues 463-504 (CVVCMCDFESRQLLRVLPCNHEFHAKCVDKWLKANRTCPICR) form an RING-type zinc finger.

As to expression, widely expressed with highest levels in testis.

Its subcellular location is the nucleus. The enzyme catalyses S-ubiquitinyl-[E2 ubiquitin-conjugating enzyme]-L-cysteine + [acceptor protein]-L-lysine = [E2 ubiquitin-conjugating enzyme]-L-cysteine + N(6)-ubiquitinyl-[acceptor protein]-L-lysine.. It participates in protein modification; protein ubiquitination. Functionally, acts as an E3 ubiquitin-protein ligase able to ubiquitinate p53/TP53 which promotes its relocalization to discrete foci associated with PML nuclear bodies. Exhibits preference for UBE2D2 as a E2 enzyme. This is E3 ubiquitin-protein ligase RNF38 from Homo sapiens (Human).